A 694-amino-acid polypeptide reads, in one-letter code: MSEASCLASPLLYTNSGIHSDSFYASLIDSATHKAQLKQIHARLLVLGLQFSGFLITKLIHASSSFGDITFARQVFDDLPRPQIFPWNAIIRGYSRNNHFQDALLMYSNMQLARVSPDSFTFPHLLKACSGLSHLQMGRFVHAQVFRLGFDADVFVQNGLIALYAKCRRLGSARTVFEGLPLPERTIVSWTAIVSAYAQNGEPMEALEIFSQMRKMDVKPDWVALVSVLNAFTCLQDLKQGRSIHASVVKMGLEIEPDLLISLNTMYAKCGQVATAKILFDKMKSPNLILWNAMISGYAKNGYAREAIDMFHEMINKDVRPDTISITSAISACAQVGSLEQARSMYEYVGRSDYRDDVFISSALIDMFAKCGSVEGARLVFDRTLDRDVVVWSAMIVGYGLHGRAREAISLYRAMERGGVHPNDVTFLGLLMACNHSGMVREGWWFFNRMADHKINPQQQHYACVIDLLGRAGHLDQAYEVIKCMPVQPGVTVWGALLSACKKHRHVELGEYAAQQLFSIDPSNTGHYVQLSNLYAAARLWDRVAEVRVRMKEKGLNKDVGCSWVEVRGRLEAFRVGDKSHPRYEEIERQVEWIESRLKEGGFVANKDASLHDLNDEEAEETLCSHSERIAIAYGLISTPQGTPLRITKNLRACVNCHAATKLISKLVDREIVVRDTNRFHHFKDGVCSCGDYW.

13 PPR repeats span residues 52 to 82, 83 to 117, 118 to 152, 153 to 183, 186 to 220, 221 to 255, 256 to 286, 287 to 321, 322 to 356, 357 to 387, 388 to 422, 423 to 457, and 458 to 488; these read SGFL…LPRP, QIFP…RVSP, DSFT…GFDA, DVFV…LPLP, TIVS…DVKP, DWVA…GLEI, EPDL…MKSP, NLIL…DVRP, DTIS…DYRD, DVFI…TLDR, DVVV…GVHP, NDVT…KINP, and QQQH…MPVQ. The tract at residues 493-568 is type E motif; the sequence is VWGALLSACK…DVGCSWVEVR (76 aa). The interval 569 to 599 is type E(+) motif; sequence GRLEAFRVGDKSHPRYEEIERQVEWIESRLK. The segment at 600–694 is type DYW motif; it reads EGGFVANKDA…DGVCSCGDYW (95 aa).

Belongs to the PPR family. PCMP-H subfamily.

The chain is Pentatricopeptide repeat-containing protein At3g12770 (PCMP-H43) from Arabidopsis thaliana (Mouse-ear cress).